The chain runs to 414 residues: GPI mannosyltransferase 1 (414 aa).

The next 10 membrane-spanning stretches (helical) occupy residues 6–26 (ISHI…FGLY), 87–107 (YIFM…LSGI), 119–139 (IIML…STRG), 149–171 (IMLS…WLGL), 183–203 (LPSI…VPIV), 213–233 (FLIT…SIYG), 282–302 (MEKF…PLLF), 316–336 (FAFV…FLIF), 356–376 (IVAL…AYQL), and 387–407 (GLLF…SVFI).

The protein belongs to the PIGM family.

The protein localises to the endoplasmic reticulum membrane. It participates in glycolipid biosynthesis; glycosylphosphatidylinositol-anchor biosynthesis. Its function is as follows. Mannosyltransferase involved in glycosylphosphatidylinositol-anchor biosynthesis. Transfers the first alpha-1,4-mannose to GlcN-acyl-PI during GPI precursor assembly. Required for cell wall integrity. In Debaryomyces hansenii (strain ATCC 36239 / CBS 767 / BCRC 21394 / JCM 1990 / NBRC 0083 / IGC 2968) (Yeast), this protein is GPI mannosyltransferase 1 (GPI14).